The primary structure comprises 145 residues: 3-hydroxyacyl-[acyl-carrier-protein] dehydratase FabZ (145 aa).

His48 is a catalytic residue.

This sequence belongs to the thioester dehydratase family. FabZ subfamily.

The protein localises to the cytoplasm. The enzyme catalyses a (3R)-hydroxyacyl-[ACP] = a (2E)-enoyl-[ACP] + H2O. Its function is as follows. Involved in unsaturated fatty acids biosynthesis. Catalyzes the dehydration of short chain beta-hydroxyacyl-ACPs and long chain saturated and unsaturated beta-hydroxyacyl-ACPs. The protein is 3-hydroxyacyl-[acyl-carrier-protein] dehydratase FabZ of Campylobacter hominis (strain ATCC BAA-381 / DSM 21671 / CCUG 45161 / LMG 19568 / NCTC 13146 / CH001A).